Consider the following 458-residue polypeptide: N-acetylgalactosamine kinase (458 aa).

Residues Arg43, Glu49, His50, and Asp52 each contribute to the alpha-D-galactose site. Residues Gly143, Ser145, and Ser146 each contribute to the ATP site. Position 190 (Asp190) interacts with alpha-D-galactose. The active-site Proton acceptor is Asp190. The ATP site is built by Asn233 and Lys234.

It belongs to the GHMP kinase family. GalK subfamily. Monomer.

The catalysed reaction is N-acetyl-alpha-D-galactosamine + ATP = N-acetyl-alpha-D-galactosamine 1-phosphate + ADP + H(+). Acts on GalNAc. Also acts as a galactokinase when galactose is present at high concentrations. This chain is N-acetylgalactosamine kinase (GALK2), found in Pongo abelii (Sumatran orangutan).